Reading from the N-terminus, the 257-residue chain is Snake venom serine protease 3 (257 aa).

An N-terminal signal peptide occupies residues 1–18 (MVLIRVLANLLILQLSYA). The propeptide occupies 19 to 24 (QKSSEL). The Peptidase S1 domain occupies 25–248 (VIGGDECNIN…YTDWIQNIIA (224 aa)). 6 disulfides stabilise this stretch: cysteine 31–cysteine 163, cysteine 50–cysteine 66, cysteine 98–cysteine 255, cysteine 142–cysteine 209, cysteine 174–cysteine 188, and cysteine 199–cysteine 224. Asparagine 44 carries an N-linked (GlcNAc...) asparagine glycan. Catalysis depends on histidine 65, which acts as the Charge relay system. A glycan (N-linked (GlcNAc...) asparagine) is linked at asparagine 103. Catalysis depends on aspartate 110, which acts as the Charge relay system. Asparagine 117 and asparagine 154 each carry an N-linked (GlcNAc...) asparagine glycan. Serine 203 serves as the catalytic Charge relay system. Asparagine 250 carries an N-linked (GlcNAc...) asparagine glycan.

Belongs to the peptidase S1 family. Snake venom subfamily. Monomer. As to expression, expressed by the venom gland.

It is found in the secreted. Functionally, snake venom serine protease that may act in the hemostasis system of the prey. The protein is Snake venom serine protease 3 (TLF3) of Protobothrops flavoviridis (Habu).